The chain runs to 310 residues: Putative HTH-type transcriptional regulatory protein M1425_1284 (310 aa).

The HTH cro/C1-type domain maps to 125–180 (LKHKREEMGYSIGDVAKFLGVSRKAIYDYEKGDSDVSLEVAEKLIDLFGDDIIGDV). The segment at residues 136–155 (IGDVAKFLGVSRKAIYDYEK) is a DNA-binding region (H-T-H motif).

This chain is Putative HTH-type transcriptional regulatory protein M1425_1284, found in Saccharolobus islandicus (strain M.14.25 / Kamchatka #1) (Sulfolobus islandicus).